The sequence spans 165 residues: S-(2-succino)cysteine N-acetyltransferase (165 aa).

The region spanning 3–162 (PRYRLAVERD…ITVYMKKQLR (160 aa)) is the N-acetyltransferase domain.

This sequence belongs to the acetyltransferase family.

The enzyme catalyses S-(2-succino)-L-cysteine + acetyl-CoA = N-acetyl-S-(2-succino)-L-cysteine + CoA + H(+). It participates in amino-acid biosynthesis; L-cysteine biosynthesis. Functionally, catalyzes the N-acetylation of S-(2-succino)cysteine. Is involved in a S-(2-succino)cysteine (2SC) degradation pathway that allows B.subtilis to grow on 2SC as a sole sulfur source, via its metabolization to cysteine. Moreover, 2SC is a toxic compound in B.subtilis at high exogenous concentrations, and this enzyme relieves 2SC toxicity via N-acetylation. The chain is S-(2-succino)cysteine N-acetyltransferase from Bacillus subtilis (strain 168).